A 283-amino-acid chain; its full sequence is Pantothenate synthetase (283 aa).

M34–H41 contributes to the ATP binding site. The active-site Proton donor is H41. Q65 serves as a coordination point for (R)-pantoate. Q65 contributes to the beta-alanine binding site. G152–D155 contacts ATP. Q158 is a binding site for (R)-pantoate. Residues V181 and M189–R192 contribute to the ATP site.

It belongs to the pantothenate synthetase family. In terms of assembly, homodimer.

Its subcellular location is the cytoplasm. It catalyses the reaction (R)-pantoate + beta-alanine + ATP = (R)-pantothenate + AMP + diphosphate + H(+). The protein operates within cofactor biosynthesis; (R)-pantothenate biosynthesis; (R)-pantothenate from (R)-pantoate and beta-alanine: step 1/1. Functionally, catalyzes the condensation of pantoate with beta-alanine in an ATP-dependent reaction via a pantoyl-adenylate intermediate. This is Pantothenate synthetase from Rhodopseudomonas palustris (strain BisB18).